Reading from the N-terminus, the 521-residue chain is Cytochrome P450 1A1 (521 aa).

Phe-229 contacts substrate. Cys-463 contributes to the heme binding site.

The protein belongs to the cytochrome P450 family. Heme is required as a cofactor.

The protein localises to the endoplasmic reticulum membrane. Its subcellular location is the microsome membrane. The enzyme catalyses an organic molecule + reduced [NADPH--hemoprotein reductase] + O2 = an alcohol + oxidized [NADPH--hemoprotein reductase] + H2O + H(+). Its function is as follows. Cytochromes P450 are a group of heme-thiolate monooxygenases. They oxidize a variety of structurally unrelated compounds, including steroids, fatty acids, and xenobiotics. The protein is Cytochrome P450 1A1 (cyp1a1) of Chelon auratus (Golden grey mullet).